The chain runs to 364 residues: GDP-fucose transporter 1 (364 aa).

8 helical membrane passes run 34 to 56 (FVLR…ISMV), 76 to 98 (VTFY…ATCC), 111 to 130 (LKVA…MITF), 140 to 162 (VAFY…YLLL), 167 to 185 (SFYA…WLGV), 195 to 214 (SWTG…LNAI), 227 to 249 (IWRL…LLAL), and 264 to 286 (AHFW…VTGL). Residues 345-364 (MKKTQEEPHPRENEKSNMEV) are disordered.

It belongs to the TPT transporter family. SLC35C subfamily.

It is found in the golgi apparatus membrane. It catalyses the reaction GMP(out) + GDP-beta-L-fucose(in) = GMP(in) + GDP-beta-L-fucose(out). Functionally, antiporter specific for GDP-l-fucose and depending on the concomitant reverse transport of GMP. Involved in GDP-fucose import from the cytoplasm into the Golgi lumen. This chain is GDP-fucose transporter 1 (SLC35C1), found in Bos taurus (Bovine).